Here is a 331-residue protein sequence, read N- to C-terminus: tRNA-cytidine(32) 2-sulfurtransferase (331 aa).

Positions 73–78 (SGGKDS) match the PP-loop motif motif. 3 residues coordinate [4Fe-4S] cluster: cysteine 148, cysteine 151, and cysteine 239.

Belongs to the TtcA family. Homodimer. Mg(2+) serves as cofactor. [4Fe-4S] cluster is required as a cofactor.

The protein resides in the cytoplasm. It catalyses the reaction cytidine(32) in tRNA + S-sulfanyl-L-cysteinyl-[cysteine desulfurase] + AH2 + ATP = 2-thiocytidine(32) in tRNA + L-cysteinyl-[cysteine desulfurase] + A + AMP + diphosphate + H(+). Its pathway is tRNA modification. In terms of biological role, catalyzes the ATP-dependent 2-thiolation of cytidine in position 32 of tRNA, to form 2-thiocytidine (s(2)C32). The sulfur atoms are provided by the cysteine/cysteine desulfurase (IscS) system. The protein is tRNA-cytidine(32) 2-sulfurtransferase of Burkholderia mallei (strain NCTC 10247).